Consider the following 214-residue polypeptide: Chalcone isomerase-like protein 1 (214 aa).

This sequence belongs to the chalcone isomerase family. Mostly expressed in glandular trichomes (lupulin glands), and, to a lower extent, in cones, cones bracts, leaves, stems and roots.

It is found in the cytoplasm. It catalyses the reaction a chalcone = a flavanone.. The protein operates within secondary metabolite biosynthesis; flavonoid biosynthesis. Its function is as follows. Involved in the biosynthesis of prenylated phenolics natural products which contribute to the bitter taste of beer and display broad biological activities. Involved in anthocyanin biosynthesis. Polyketide binding proteins (PBP) which reduces the catalytic activities of CHS_H1 and PT1L and prevents demethylxanthohumol (DMX) production, by binding to DMX and naringenin chalcone (NC) to stabilize the chalconoids ring-opened structure. This is Chalcone isomerase-like protein 1 from Humulus lupulus (European hop).